A 109-amino-acid chain; its full sequence is Large ribosomal subunit protein uL23 (109 aa).

The protein belongs to the universal ribosomal protein uL23 family. Part of the 50S ribosomal subunit. Contacts protein L29, and trigger factor when it is bound to the ribosome.

Its function is as follows. One of the early assembly proteins it binds 23S rRNA. One of the proteins that surrounds the polypeptide exit tunnel on the outside of the ribosome. Forms the main docking site for trigger factor binding to the ribosome. This is Large ribosomal subunit protein uL23 from Chlorobium phaeobacteroides (strain BS1).